Reading from the N-terminus, the 376-residue chain is Aminomethyltransferase (376 aa).

This sequence belongs to the GcvT family. As to quaternary structure, the glycine cleavage system is composed of four proteins: P, T, L and H.

The enzyme catalyses N(6)-[(R)-S(8)-aminomethyldihydrolipoyl]-L-lysyl-[protein] + (6S)-5,6,7,8-tetrahydrofolate = N(6)-[(R)-dihydrolipoyl]-L-lysyl-[protein] + (6R)-5,10-methylene-5,6,7,8-tetrahydrofolate + NH4(+). In terms of biological role, the glycine cleavage system catalyzes the degradation of glycine. The protein is Aminomethyltransferase of Nostoc sp. (strain PCC 7120 / SAG 25.82 / UTEX 2576).